Consider the following 978-residue polypeptide: Probable serine/threonine-protein kinase PLK (978 aa).

Over residues I19 to K36 the composition is skewed to low complexity. Disordered regions lie at residues I19 to H66 and Q121 to Q143. Over residues S37 to P53 the composition is skewed to polar residues. A compositionally biased stretch (low complexity) spans S54–S64. Residues Y163–F416 enclose the Protein kinase domain. ATP-binding positions include L169–C177 and K192. Catalysis depends on D286, which acts as the Proton acceptor. 2 disordered regions span residues G463–L554 and E601–T638. Low complexity-rich tracts occupy residues H473–Q492 and I500–N549. 2 coiled-coil regions span residues K497–S555 and I592–N630. In terms of domain architecture, POLO box 1 spans Y696 to N780. Positions N798–S819 are disordered. Positions Y826–Y904 constitute a POLO box 2 domain. The disordered stretch occupies residues P908–Q978. The segment covering Q913–Q978 has biased composition (low complexity).

It belongs to the protein kinase superfamily. Ser/Thr protein kinase family. CDC5/Polo subfamily.

It catalyses the reaction L-seryl-[protein] + ATP = O-phospho-L-seryl-[protein] + ADP + H(+). It carries out the reaction L-threonyl-[protein] + ATP = O-phospho-L-threonyl-[protein] + ADP + H(+). This is Probable serine/threonine-protein kinase PLK (PLK) from Dictyostelium discoideum (Social amoeba).